The primary structure comprises 105 residues: Small ribosomal subunit protein uS10 (105 aa).

The protein belongs to the universal ribosomal protein uS10 family. In terms of assembly, part of the 30S ribosomal subunit.

Its function is as follows. Involved in the binding of tRNA to the ribosomes. This Agathobacter rectalis (strain ATCC 33656 / DSM 3377 / JCM 17463 / KCTC 5835 / VPI 0990) (Eubacterium rectale) protein is Small ribosomal subunit protein uS10.